A 93-amino-acid polypeptide reads, in one-letter code: Cell division topological specificity factor (93 aa).

This sequence belongs to the MinE family.

Its function is as follows. Prevents the cell division inhibition by proteins MinC and MinD at internal division sites while permitting inhibition at polar sites. This ensures cell division at the proper site by restricting the formation of a division septum at the midpoint of the long axis of the cell. This is Cell division topological specificity factor from Alkaliphilus oremlandii (strain OhILAs) (Clostridium oremlandii (strain OhILAs)).